Consider the following 440-residue polypeptide: Xylose isomerase (440 aa).

Active-site residues include His101 and Asp104. Mg(2+)-binding residues include Glu232, Glu268, His271, Asp296, Asp307, Asp309, and Asp339.

The protein belongs to the xylose isomerase family. As to quaternary structure, homotetramer. Requires Mg(2+) as cofactor.

The protein resides in the cytoplasm. It carries out the reaction alpha-D-xylose = alpha-D-xylulofuranose. In Escherichia coli (strain SMS-3-5 / SECEC), this protein is Xylose isomerase.